A 103-amino-acid chain; its full sequence is Large ribosomal subunit protein bL21 (103 aa).

It belongs to the bacterial ribosomal protein bL21 family. Part of the 50S ribosomal subunit. Contacts protein L20.

Functionally, this protein binds to 23S rRNA in the presence of protein L20. This chain is Large ribosomal subunit protein bL21, found in Lactobacillus delbrueckii subsp. bulgaricus (strain ATCC 11842 / DSM 20081 / BCRC 10696 / JCM 1002 / NBRC 13953 / NCIMB 11778 / NCTC 12712 / WDCM 00102 / Lb 14).